Consider the following 380-residue polypeptide: E3 ubiquitin-protein ligase PHF7 (380 aa).

Positions 1–23 (MRTIKEKKEHPRLRKTARTKKVT) are disordered. Residues 10 to 23 (HPRLRKTARTKKVT) are compositionally biased toward basic residues. The C2HC pre-PHD-type zinc finger occupies 30 to 68 (GPVCLLCFQEPGDPEKLGEFLQKDNLCVHYFCLILSSKL). Residues C33, C36, H58, and C61 each contribute to the Zn(2+) site. Residues 67–92 (KLPQKGQPNRGLHGFMPEDIKKEAAR) are required for interaction and ubiquitination of the nucleosome core particle. A PHD-type zinc finger spans residues 96–145 (KVCFVCKRKGAAIRCQKDQCVQNFHLPCGQERGCLSQFFGEYKSYCGKHR). Residues C98, C101, C110, C115, H120, C123, C141, H144, C159, C162, C178, C179, H185, C188, C203, C206, C247, C252, C272, C275, H281, C284, C296, and C299 each coordinate Zn(2+). The tract at residues 150 to 306 (IHQRSFGESC…NECLPASTED (157 aa)) is required for interaction with ubiquitinated UBE2D2. The segment at 159–207 (CVLCCEDLSRASVENIRSPCCSQAIYHRKCIQKYAHTSAKHFFKCPQCN) adopts an RING-type; degenerate zinc-finger fold. Residues 243-300 (RYQHCDAPICLYEQGRDSFEDEGRWRLILCATCGSHGTHRDCSSLRPNSKKWECNECL) are required for association with and ubiquitination of H3. Low complexity predominate over residues 352–367 (EKPESSSGSSCQSWRS). Residues 352–380 (EKPESSSGSSCQSWRSKGIKVTKDCKKSK) form a disordered region.

In terms of assembly, interacts with MEF2C; the interaction promotes MEF2C binding to its transcription targets. Interacts with GATA4; the interaction promotes GATA4 binding to its transcription targets. Interacts with UBE2D2; the interaction inhibits cleavage of PHF7 and promotes association of the complex with the nucleosome core particle.

The protein resides in the nucleus. The catalysed reaction is S-ubiquitinyl-[E2 ubiquitin-conjugating enzyme]-L-cysteine + [acceptor protein]-L-lysine = [E2 ubiquitin-conjugating enzyme]-L-cysteine + N(6)-ubiquitinyl-[acceptor protein]-L-lysine.. It functions in the pathway protein modification; protein ubiquitination. Functionally, E3 ubiquitin-protein ligase which ubiquitinates histone H3 at 'Lys-14'. Required for male fertility, via inhibition of SPOP-mediated BRDT degradation when in the presence of acetylated histone H4 in early condensing spermatids. Stabilization of BRDT allows it to facilitate histone removal in early condensing spermatids and promote the progression of histone-to-protamine exchange. Promotes the expression of steroidogenesis proteins in the testes, and as a result plays a role in maintaining testosterone levels and repressing osteoclastogenesis. Promotes transcription of cardiac enhancer genes by facilitating binding of cardiac transcription factors such as MEF2C and GATA4 to target gene promoters. Ubiquitinates histone H4. Ubiquitinates histone H2A and H3 as part of the nucleosome core particle. The chain is E3 ubiquitin-protein ligase PHF7 from Rattus norvegicus (Rat).